A 259-amino-acid polypeptide reads, in one-letter code: Global transcriptional regulator CodY (259 aa).

A GAF domain region spans residues 1-155 (MNLLEKTRKI…GATVVGMEIL (155 aa)). Positions 203-222 (ASKIADRVGITRSVIVNALR) form a DNA-binding region, H-T-H motif. Position 215 is a phosphoserine (Ser-215).

The protein belongs to the CodY family.

The protein resides in the cytoplasm. DNA-binding global transcriptional regulator which is involved in the adaptive response to starvation and acts by directly or indirectly controlling the expression of numerous genes in response to nutrient availability. During rapid exponential growth, CodY is highly active and represses genes whose products allow adaptation to nutrient depletion. In Geobacillus thermodenitrificans (strain NG80-2), this protein is Global transcriptional regulator CodY.